The primary structure comprises 314 residues: Acetyl-coenzyme A carboxylase carboxyl transferase subunit beta (314 aa).

The 271-residue stretch at 37–307 (LWQKCPACDA…MSLPALEPTY (271 aa)) folds into the CoA carboxyltransferase N-terminal domain. The Zn(2+) site is built by C41, C44, C60, and C63. A C4-type zinc finger spans residues 41-63 (CPACDALTYTKDLQQNWQVCPSC).

It belongs to the AccD/PCCB family. Acetyl-CoA carboxylase is a heterohexamer composed of biotin carboxyl carrier protein (AccB), biotin carboxylase (AccC) and two subunits each of ACCase subunit alpha (AccA) and ACCase subunit beta (AccD). Zn(2+) serves as cofactor.

Its subcellular location is the cytoplasm. It carries out the reaction N(6)-carboxybiotinyl-L-lysyl-[protein] + acetyl-CoA = N(6)-biotinyl-L-lysyl-[protein] + malonyl-CoA. The protein operates within lipid metabolism; malonyl-CoA biosynthesis; malonyl-CoA from acetyl-CoA: step 1/1. In terms of biological role, component of the acetyl coenzyme A carboxylase (ACC) complex. Biotin carboxylase (BC) catalyzes the carboxylation of biotin on its carrier protein (BCCP) and then the CO(2) group is transferred by the transcarboxylase to acetyl-CoA to form malonyl-CoA. This Synechococcus sp. (strain JA-3-3Ab) (Cyanobacteria bacterium Yellowstone A-Prime) protein is Acetyl-coenzyme A carboxylase carboxyl transferase subunit beta.